We begin with the raw amino-acid sequence, 481 residues long: MTQYTLKQASVLLQSKQISAVELASAYLAAIAEKNPALNGYITIDQDKTLAEARAADERIAQGNASALTGIPVAYKDIFCQTGWRSACASKMLDNFISSYTATVVQNLLDEGMVTLGRTNMDEFAMGSTNENSFYGATKNPWNPEHVPGGSSGGSAAVVAARLAPAALGSDTGGSIRQPASHCGITGIKPTYGTVSRFGMVAYASSFDQAGPMAQTAEDCAILLNAMAGFDPKDSTSLEREKEDYTRDLNQPLKGLKIGLPKEYFGEGNSADVLTALQNTIDLLKAQGAELIEVSLPQTKLSIPAYYVLASAEASTNLSRYDGVRYGHRAAQFGDLEEMYGKTRAEGFGSEVKRRIMIGTYVLSHGYYDAYYLKAQKLRRLVADDFQTVFARCDLILAPTAPTAAPKIGADSSPVETYLSDIYTIAVNLAGLPALTLPAGFSGGGLPVGVQLIGNYFAEARILGAAHQIQLNSDWHGKRPE.

Catalysis depends on charge relay system residues Lys76 and Ser151. Ser175 functions as the Acyl-ester intermediate in the catalytic mechanism.

The protein belongs to the amidase family. GatA subfamily. Heterotrimer of A, B and C subunits.

It carries out the reaction L-glutamyl-tRNA(Gln) + L-glutamine + ATP + H2O = L-glutaminyl-tRNA(Gln) + L-glutamate + ADP + phosphate + H(+). Its function is as follows. Allows the formation of correctly charged Gln-tRNA(Gln) through the transamidation of misacylated Glu-tRNA(Gln) in organisms which lack glutaminyl-tRNA synthetase. The reaction takes place in the presence of glutamine and ATP through an activated gamma-phospho-Glu-tRNA(Gln). This chain is Glutamyl-tRNA(Gln) amidotransferase subunit A, found in Neisseria meningitidis serogroup C (strain 053442).